The chain runs to 37 residues: Large ribosomal subunit protein bL36c (37 aa).

It belongs to the bacterial ribosomal protein bL36 family.

Its subcellular location is the plastid. The protein resides in the chloroplast. The protein is Large ribosomal subunit protein bL36c (rpl36) of Marchantia polymorpha (Common liverwort).